Here is a 212-residue protein sequence, read N- to C-terminus: Protein-L-isoaspartate O-methyltransferase (212 aa).

The active site involves Ser-60.

The protein belongs to the methyltransferase superfamily. L-isoaspartyl/D-aspartyl protein methyltransferase family.

The protein localises to the cytoplasm. The catalysed reaction is [protein]-L-isoaspartate + S-adenosyl-L-methionine = [protein]-L-isoaspartate alpha-methyl ester + S-adenosyl-L-homocysteine. Its function is as follows. Catalyzes the methyl esterification of L-isoaspartyl residues in peptides and proteins that result from spontaneous decomposition of normal L-aspartyl and L-asparaginyl residues. It plays a role in the repair and/or degradation of damaged proteins. The protein is Protein-L-isoaspartate O-methyltransferase of Methanococcus maripaludis (strain DSM 14266 / JCM 13030 / NBRC 101832 / S2 / LL).